The following is a 552-amino-acid chain: Non-structural protein NS1 (552 aa).

Belongs to the orbivirus non-structural protein NS1 family.

This is Non-structural protein NS1 (Segment-5) from Antilocapra americana (Pronghorn).